We begin with the raw amino-acid sequence, 285 residues long: Bifunctional protein FolD (285 aa).

Residues glycine 165–glycine 167, threonine 192, and valine 233 contribute to the NADP(+) site.

Belongs to the tetrahydrofolate dehydrogenase/cyclohydrolase family. Homodimer.

The enzyme catalyses (6R)-5,10-methylene-5,6,7,8-tetrahydrofolate + NADP(+) = (6R)-5,10-methenyltetrahydrofolate + NADPH. It carries out the reaction (6R)-5,10-methenyltetrahydrofolate + H2O = (6R)-10-formyltetrahydrofolate + H(+). The protein operates within one-carbon metabolism; tetrahydrofolate interconversion. In terms of biological role, catalyzes the oxidation of 5,10-methylenetetrahydrofolate to 5,10-methenyltetrahydrofolate and then the hydrolysis of 5,10-methenyltetrahydrofolate to 10-formyltetrahydrofolate. In Corynebacterium jeikeium (strain K411), this protein is Bifunctional protein FolD.